The sequence spans 356 residues: Alanine racemase (356 aa).

Catalysis depends on lysine 35, which acts as the Proton acceptor; specific for D-alanine. The residue at position 35 (lysine 35) is an N6-(pyridoxal phosphate)lysine. Substrate is bound at residue arginine 130. The Proton acceptor; specific for L-alanine role is filled by tyrosine 253. Substrate is bound at residue methionine 301.

The protein belongs to the alanine racemase family. Pyridoxal 5'-phosphate is required as a cofactor.

The catalysed reaction is L-alanine = D-alanine. Its pathway is amino-acid biosynthesis; D-alanine biosynthesis; D-alanine from L-alanine: step 1/1. Functionally, catalyzes the interconversion of L-alanine and D-alanine. May also act on other amino acids. The polypeptide is Alanine racemase (alr) (Paraburkholderia phytofirmans (strain DSM 17436 / LMG 22146 / PsJN) (Burkholderia phytofirmans)).